A 230-amino-acid polypeptide reads, in one-letter code: Response regulator MprA (230 aa).

Residues 4-118 form the Response regulatory domain; it reads RILVVDDDRA…ELLARMRALL (115 aa). Asp-48 is subject to 4-aspartylphosphate. A DNA-binding region (ompR/PhoB-type) is located at residues 129–227; that stretch reads SMAMRFSDLT…VRGVGYVLRE (99 aa).

In terms of assembly, monomer. Interaction with each conserved 8-bp repeat requires tandem binding by two protein monomers. In terms of processing, phosphorylated and dephosphorylated by MprB.

The protein localises to the cytoplasm. Functionally, member of the two-component regulatory system MprB/MprA which contributes to maintaining a balance among several systems involved in stress resistance and is required for establishment and maintenance of persistent infection in the host. Functions as a transcriptional regulator that recognizes a 19-bp nucleotide motif comprizing two loosely conserved 8-bp direct DNA-binding motif repeats separated by a 3-bp spacer region. MprB/MprA up-regulates expression of mprA and pepD. The sequence is that of Response regulator MprA (mprA) from Mycobacterium bovis (strain ATCC BAA-935 / AF2122/97).